The chain runs to 194 residues: Large ribosomal subunit protein bL25 (194 aa).

Belongs to the bacterial ribosomal protein bL25 family. CTC subfamily. Part of the 50S ribosomal subunit; part of the 5S rRNA/L5/L18/L25 subcomplex. Contacts the 5S rRNA. Binds to the 5S rRNA independently of L5 and L18.

Its function is as follows. This is one of the proteins that binds to the 5S RNA in the ribosome where it forms part of the central protuberance. This is Large ribosomal subunit protein bL25 from Thermobifida fusca (strain YX).